The following is a 464-amino-acid chain: Non-neuronal cytoplasmic intermediate filament protein (464 aa).

Residues 1–14 show a composition bias toward polar residues; sequence MSTQTKKVTRTIIT. A disordered region spans residues 1–59; sequence MSTQTKKVTRTIITSSSGGGGGGGGGRASYSSSGRFSGGGGRMRAGGVTSRRSVGSSYS. The segment at 1–101 is head; it reads MSTQTKKVTR…RMTRAHEKQE (101 aa). Gly residues predominate over residues 17–27; it reads SGGGGGGGGGR. Low complexity predominate over residues 45-59; that stretch reads AGGVTSRRSVGSSYS. Residues 98 to 413 form the IF rod domain; the sequence is EKQELSHLND…KLLEGEEIRL (316 aa). Residues 102–133 are coil 1A; that stretch reads LSHLNDRFASYIDKVRYLQERNSKLEAQIKIQ. Residues 134-144 form a linker 1 region; sequence ESREAPNIKDL. The tract at residues 145–237 is coil 1B; that stretch reads YEKELRDLRA…FLKRVHDEEI (93 aa). A linker 2 region spans residues 238-264; sequence RQLQDQLNESLTIVEVDSRAASTFAPG. Residues 265–413 form a coil 2 region; the sequence is PDLTEALREI…KLLEGEEIRL (149 aa). The interval 414-464 is tail; it reads FGESKEGVQQTSSSSSSSYQYSMKSGSGGGGGGSSSGKQQVTVSVSSGEEK. Positions 415–464 are disordered; it reads GESKEGVQQTSSSSSSSYQYSMKSGSGGGGGGSSSGKQQVTVSVSSGEEK. A compositionally biased stretch (low complexity) spans 420–438; it reads GVQQTSSSSSSSYQYSMKS. Over residues 439 to 448 the composition is skewed to gly residues; it reads GSGGGGGGSS. Residues 449–464 show a composition bias toward low complexity; the sequence is SGKQQVTVSVSSGEEK.

Belongs to the intermediate filament family. Can form homopolymers.

It localises to the cytoplasm. The protein is Non-neuronal cytoplasmic intermediate filament protein of Branchiostoma lanceolatum (Common lancelet).